The sequence spans 500 residues: Lysine--tRNA ligase (500 aa).

Positions 411 and 418 each coordinate Mg(2+).

This sequence belongs to the class-II aminoacyl-tRNA synthetase family. As to quaternary structure, homodimer. Mg(2+) is required as a cofactor.

It is found in the cytoplasm. The catalysed reaction is tRNA(Lys) + L-lysine + ATP = L-lysyl-tRNA(Lys) + AMP + diphosphate. In Azoarcus sp. (strain BH72), this protein is Lysine--tRNA ligase.